A 407-amino-acid polypeptide reads, in one-letter code: 1-deoxy-D-xylulose 5-phosphate reductoisomerase (407 aa).

Thr25, Gly26, Ser27, Ile28, Asn53, and Asn136 together coordinate NADPH. Lys137 provides a ligand contact to 1-deoxy-D-xylulose 5-phosphate. Residue Glu138 coordinates NADPH. Asp162 is a Mn(2+) binding site. Positions 163, 164, 188, and 211 each coordinate 1-deoxy-D-xylulose 5-phosphate. Residue Glu164 coordinates Mn(2+). Residue Gly217 participates in NADPH binding. 4 residues coordinate 1-deoxy-D-xylulose 5-phosphate: Ser224, Asn229, Lys230, and Glu233. Position 233 (Glu233) interacts with Mn(2+).

It belongs to the DXR family. Mg(2+) is required as a cofactor. Requires Mn(2+) as cofactor.

The catalysed reaction is 2-C-methyl-D-erythritol 4-phosphate + NADP(+) = 1-deoxy-D-xylulose 5-phosphate + NADPH + H(+). It participates in isoprenoid biosynthesis; isopentenyl diphosphate biosynthesis via DXP pathway; isopentenyl diphosphate from 1-deoxy-D-xylulose 5-phosphate: step 1/6. Its function is as follows. Catalyzes the NADPH-dependent rearrangement and reduction of 1-deoxy-D-xylulose-5-phosphate (DXP) to 2-C-methyl-D-erythritol 4-phosphate (MEP). This chain is 1-deoxy-D-xylulose 5-phosphate reductoisomerase, found in Rhodopseudomonas palustris (strain BisB5).